Reading from the N-terminus, the 306-residue chain is Fe-S cluster assembly protein dre2 (306 aa).

The tract at residues 21–150 (NVTQKRSLLL…EKPQYQEAAV (130 aa)) is N-terminal SAM-like domain. A linker region spans residues 151–196 (PLRFGANKRKNKISPEPVKIESVGFVDNYDDDELINEDDLLDEEDL). Residues Cys-206, Cys-218, Cys-221, and Cys-223 each coordinate [2Fe-2S] cluster. Positions 206-223 (CQPETAKKRRRACKDCTC) are fe-S binding site A. Residues Cys-269, Cys-272, Cys-280, and Cys-283 each coordinate [4Fe-4S] cluster. Short sequence motifs (cx2C motif) lie at residues 269 to 272 (CNSC) and 280 to 283 (CASC). The segment at 269-283 (CNSCSLGDAFRCASC) is fe-S binding site B.

The protein belongs to the anamorsin family. Monomer. Interacts with tah18. Interacts with mia40. It depends on [2Fe-2S] cluster as a cofactor. [4Fe-4S] cluster is required as a cofactor.

It localises to the cytoplasm. It is found in the mitochondrion intermembrane space. Component of the cytosolic iron-sulfur (Fe-S) protein assembly (CIA) machinery required for the maturation of extramitochondrial Fe-S proteins. Part of an electron transfer chain functioning in an early step of cytosolic Fe-S biogenesis, facilitating the de novo assembly of a [4Fe-4S] cluster on the scaffold complex cfd1-nbp35. Electrons are transferred to dre2 from NADPH via the FAD- and FMN-containing protein tah18. Tah18-dre2 are also required for the assembly of the diferric tyrosyl radical cofactor of ribonucleotide reductase (RNR), probably by providing electrons for reduction during radical cofactor maturation in the catalytic small subunit rnr2. The chain is Fe-S cluster assembly protein dre2 from Talaromyces stipitatus (strain ATCC 10500 / CBS 375.48 / QM 6759 / NRRL 1006) (Penicillium stipitatum).